A 242-amino-acid polypeptide reads, in one-letter code: Invasion chromosome antigen R (242 aa).

It is found in the secreted. In terms of biological role, may contribute to pathogenesis, although some of its characteristics suggest it is a fossil gene. The polypeptide is Invasion chromosome antigen R (Shigella flexneri serotype 5a (strain M90T)).